The primary structure comprises 239 residues: LexA repressor (239 aa).

Positions 27-47 (FDEMKDALDLASKSGIHRLIT) form a DNA-binding region, H-T-H motif. Residues S159 and K197 each act as for autocatalytic cleavage activity in the active site.

The protein belongs to the peptidase S24 family. In terms of assembly, homodimer.

The enzyme catalyses Hydrolysis of Ala-|-Gly bond in repressor LexA.. In terms of biological role, represses a number of genes involved in the response to DNA damage (SOS response), including recA and lexA. In the presence of single-stranded DNA, RecA interacts with LexA causing an autocatalytic cleavage which disrupts the DNA-binding part of LexA, leading to derepression of the SOS regulon and eventually DNA repair. This is LexA repressor from Rhizobium radiobacter (Agrobacterium tumefaciens).